The chain runs to 205 residues: Thiamine-phosphate synthase (205 aa).

4-amino-2-methyl-5-(diphosphooxymethyl)pyrimidine contacts are provided by residues 34–38 (QLRCK) and Asn66. Mg(2+) contacts are provided by Asp67 and Asp86. Position 105 (Ser105) interacts with 4-amino-2-methyl-5-(diphosphooxymethyl)pyrimidine. 131–133 (TTT) contacts 2-[(2R,5Z)-2-carboxy-4-methylthiazol-5(2H)-ylidene]ethyl phosphate. Residue Lys134 participates in 4-amino-2-methyl-5-(diphosphooxymethyl)pyrimidine binding. 2-[(2R,5Z)-2-carboxy-4-methylthiazol-5(2H)-ylidene]ethyl phosphate is bound at residue Gly163.

Belongs to the thiamine-phosphate synthase family. Mg(2+) serves as cofactor.

It carries out the reaction 2-[(2R,5Z)-2-carboxy-4-methylthiazol-5(2H)-ylidene]ethyl phosphate + 4-amino-2-methyl-5-(diphosphooxymethyl)pyrimidine + 2 H(+) = thiamine phosphate + CO2 + diphosphate. The catalysed reaction is 2-(2-carboxy-4-methylthiazol-5-yl)ethyl phosphate + 4-amino-2-methyl-5-(diphosphooxymethyl)pyrimidine + 2 H(+) = thiamine phosphate + CO2 + diphosphate. It catalyses the reaction 4-methyl-5-(2-phosphooxyethyl)-thiazole + 4-amino-2-methyl-5-(diphosphooxymethyl)pyrimidine + H(+) = thiamine phosphate + diphosphate. It functions in the pathway cofactor biosynthesis; thiamine diphosphate biosynthesis; thiamine phosphate from 4-amino-2-methyl-5-diphosphomethylpyrimidine and 4-methyl-5-(2-phosphoethyl)-thiazole: step 1/1. Its function is as follows. Condenses 4-methyl-5-(beta-hydroxyethyl)thiazole monophosphate (THZ-P) and 2-methyl-4-amino-5-hydroxymethyl pyrimidine pyrophosphate (HMP-PP) to form thiamine monophosphate (TMP). The polypeptide is Thiamine-phosphate synthase (Neisseria meningitidis serogroup A / serotype 4A (strain DSM 15465 / Z2491)).